The sequence spans 544 residues: Membrane protein insertase YidC (544 aa).

5 helical membrane passes run 6–26 (NILL…WQTD), 345–365 (LLMF…LITL), 423–443 (GGCL…WVLL), 460–480 (LSVQ…MFVM), and 503–523 (VVFT…WLVG).

Belongs to the OXA1/ALB3/YidC family. Type 1 subfamily. As to quaternary structure, interacts with the Sec translocase complex via SecD. Specifically interacts with transmembrane segments of nascent integral membrane proteins during membrane integration.

The protein resides in the cell inner membrane. Required for the insertion and/or proper folding and/or complex formation of integral membrane proteins into the membrane. Involved in integration of membrane proteins that insert both dependently and independently of the Sec translocase complex, as well as at least some lipoproteins. Aids folding of multispanning membrane proteins. The chain is Membrane protein insertase YidC from Shewanella woodyi (strain ATCC 51908 / MS32).